Consider the following 305-residue polypeptide: Putative S-adenosyl-L-methionine-dependent methyltransferase MAB_4607c (305 aa).

Residues aspartate 128 and 155–156 (DL) contribute to the S-adenosyl-L-methionine site.

Belongs to the UPF0677 family.

In terms of biological role, exhibits S-adenosyl-L-methionine-dependent methyltransferase activity. This chain is Putative S-adenosyl-L-methionine-dependent methyltransferase MAB_4607c, found in Mycobacteroides abscessus (strain ATCC 19977 / DSM 44196 / CCUG 20993 / CIP 104536 / JCM 13569 / NCTC 13031 / TMC 1543 / L948) (Mycobacterium abscessus).